Here is a 2115-residue protein sequence, read N- to C-terminus: Non-reducing polyketide synthase ascC (2115 aa).

Residues 1–21 (MTLIQTKHSASAAVFSPQSTA) are disordered. The segment at 14 to 260 (VFSPQSTAPK…HNSRNTELAQ (247 aa)) is N-terminal acylcarrier protein transacylase domain (SAT). Residues 381–805 (PDSIAIVGSA…GSNSALICSE (425 aa)) enclose the Ketosynthase family 3 (KS3) domain. Active-site for beta-ketoacyl synthase activity residues include Cys553, His689, and His728. The malonyl-CoA:ACP transacylase (MAT) domain stretch occupies residues 908 to 1210 (LTFSGQSRTT…ANPSAHTFQA (303 aa)). The active-site For acyl/malonyl transferase activity is Ser995. An N-terminal hotdog fold region spans residues 1280 to 1406 (PKKVQQLVTL…GDFFATSGEM (127 aa)). Positions 1280–1581 (PKKVQQLVTL…FMRIKAAKLE (302 aa)) constitute a PKS/mFAS DH domain. The interval 1285-1580 (QLVTLKKTEG…QFMRIKAAKL (296 aa)) is product template (PT) domain. His1315 functions as the Proton acceptor; for dehydratase activity in the catalytic mechanism. Positions 1428-1581 (DAERLRTATA…FMRIKAAKLE (154 aa)) are C-terminal hotdog fold. Residue Asp1492 is the Proton donor; for dehydratase activity of the active site. The interval 1587–1624 (ANPGSKTKSTNGNALPSVPRSVPAGPTSAPQQVAPTTM) is disordered. The span at 1588-1600 (NPGSKTKSTNGNA) shows a compositional bias: polar residues. A Carrier domain is found at 1640-1724 (PSKIADLKSL…PTAALTEGLV (85 aa)). Position 1674 is an O-(pantetheine 4'-phosphoryl)serine (Ser1674). Polar residues predominate over residues 1734 to 1748 (SDSIRNSTGFHTTIP). Residues 1734 to 1767 (SDSIRNSTGFHTTIPATPAELHSNPPDSLDGSTV) are disordered. Residues 1777–2107 (ARFKLDTMVY…YDFLLGELEN (331 aa)) are thioesterase (TE) domain. Residues Ser1897 and Asp2045 each act as for thioesterase activity in the active site.

It carries out the reaction 3 malonyl-CoA + acetyl-CoA + 2 H(+) = orsellinate + 3 CO2 + 4 CoA. It functions in the pathway secondary metabolite biosynthesis; terpenoid biosynthesis. Non-reducing polyketide synthase; part of the asc-1 gene cluster that mediates the biosynthesis of both ascochlorin and ascofuranone, a strong inhibitor of cyanide-insensitive alternative oxidases and a promising drug candidate against African trypanosomiasis. The first step in the pathway is performed by the non-reducing polyketide synthase ascC that produces orsellinic acid by condensing acetyl-CoA with 3 malonyl-CoA units. Orsellinic acid is then prenylated by the prenyltransferase ascA to yield ilicicolinic acid B. Ilicicolinic acid B is further reduced to ilicicolin B by the reductase ascB. The halogenase ascD then chlorinates ilicicolin B to produce ilicicolin A which is converted to ilicicolin A epoxide by the cytochrome P450 monooxygenase ascE that catalyzes stereoselective epoxidation of the terminal double bond of the prenyl group. Ilicicolin A epoxide is the last common precursor for the biosynthesis of ascofuranone and ascochlorin. The terpene cyclase ascF produces a monocyclic terpene, and the cyclization reaction is proposed to be initiated by protonation of the terminal epoxide of ilicicolin A epoxide to generate a monocyclic tertiarycation, which is followed by a series of hydride and methyl shifts with abstraction of proton, leading to the formation of the (14S,15R,19R)-trimethylcyclohexanone ring structure of ilicicolin C, which is finally reduced to ascochlorin by the dehydrogenase ascG. On the other hand, ilicicolin A epoxide is hydroxylated by the cytochrome P450 monooxygenase ascH, and the resultant product is cyclized by the terpene cyclase ascI to ascofuranol via protonation-initiated epoxide ring opening, which facilitates the 6-endo-tet cyclization to form the tetrahy-drofuran ring. Finally, ascofuranol is oxidized into ascofuranone by ascJ. The protein is Non-reducing polyketide synthase ascC of Acremonium egyptiacum (Oospora egyptiaca).